The chain runs to 586 residues: Protein BONZAI 2 (586 aa).

Gly2 is lipidated: N-myristoyl glycine. C2 domains follow at residues 25–164 (SAAT…ALEL) and 176–303 (PQHN…NLAL). Ca(2+) is bound by residues Asp62, Asp68, Asp121, and Asp123. The VWFA domain occupies 344–563 (NFMVAIDFTA…SVVEALLAEL (220 aa)).

The protein belongs to the copine family. In terms of assembly, interacts with BAP1 and BAP2. Ca(2+) is required as a cofactor. As to expression, expressed in roots, leaves and stems. Expressed in young growing tissues.

It is found in the cell membrane. Its function is as follows. Negative regulator of cell death and defense responses. May repress a number of R genes and may have effects in promoting growth and development. May function in membrane trafficking and in fusion of vesicles with plasma membrane. The protein is Protein BONZAI 2 (BON2) of Arabidopsis thaliana (Mouse-ear cress).